The following is a 954-amino-acid chain: Glycine dehydrogenase (decarboxylating) (954 aa).

The segment covering 1–13 has biased composition (polar residues); that stretch reads MTELLQSLSTQNE. Residues 1-24 form a disordered region; that stretch reads MTELLQSLSTQNEFVARHNGPNKS. K704 is subject to N6-(pyridoxal phosphate)lysine.

This sequence belongs to the GcvP family. The glycine cleavage system is composed of four proteins: P, T, L and H. The cofactor is pyridoxal 5'-phosphate.

It catalyses the reaction N(6)-[(R)-lipoyl]-L-lysyl-[glycine-cleavage complex H protein] + glycine + H(+) = N(6)-[(R)-S(8)-aminomethyldihydrolipoyl]-L-lysyl-[glycine-cleavage complex H protein] + CO2. Its function is as follows. The glycine cleavage system catalyzes the degradation of glycine. The P protein binds the alpha-amino group of glycine through its pyridoxal phosphate cofactor; CO(2) is released and the remaining methylamine moiety is then transferred to the lipoamide cofactor of the H protein. In Vibrio campbellii (strain ATCC BAA-1116), this protein is Glycine dehydrogenase (decarboxylating).